Here is a 551-residue protein sequence, read N- to C-terminus: Nucleobase-ascorbate transporter 3 (551 aa).

The interval 1–30 (MVETGHHHQHPPAPAAAGHPPVPSMAMARN) is disordered. The next 12 helical transmembrane spans lie at 56-76 (ETVVLAFQHYIVMLGTTVLIA), 92-111 (RVIQTILFMSGINTLLQTLI), 117-136 (TVMGVSFAYVLPVLSIIRDY), 158-178 (SLIISSFVNIIIGYGQAWGNL), 179-199 (IRIFSPIIVVPVVSVVSLGLF), 202-222 (GFPLLANCVEIGLPMLILLII), 242-262 (ALLVCLAIIWAFAAILTVSGA), 306-326 (VFGMFGAAIVASAESTGVFFA), 390-410 (FFMIFFSIFGKFGAFFASIPL), 412-432 (IFAGVYCILLGIVVAVGISFI), 442-462 (NMYVIGVSLFLSLSIAQYFLA), and 481-501 (DILNTIFASAPLVATILATIL).

Belongs to the nucleobase:cation symporter-2 (NCS2) (TC 2.A.40) family. In terms of tissue distribution, expressed in the apical meristem 4 days after imbibition (DAI). Expressed in the major veins of rosette leaves and pedicels. Expressed in the root central cylinder, root meristems, root tips and lateral root primordia.

Its subcellular location is the membrane. The chain is Nucleobase-ascorbate transporter 3 (NAT3) from Arabidopsis thaliana (Mouse-ear cress).